The following is a 186-amino-acid chain: UPF0669 protein C6orf120 homolog (186 aa).

Residues 1-19 form the signal peptide; it reads MVPFWAGLLVLSALPQTLG. N-linked (GlcNAc...) asparagine glycosylation is present at Asn-47. A disordered region spans residues 141–165; that stretch reads KNSYSSDETPGQPRQSQGPEDTEEE. Polar residues predominate over residues 142-159; the sequence is NSYSSDETPGQPRQSQGP.

The protein belongs to the UPF0669 family.

The protein localises to the secreted. The polypeptide is UPF0669 protein C6orf120 homolog (Danio rerio (Zebrafish)).